The primary structure comprises 261 residues: MYDDLKGKTVVVTGSSKGLGAAMARRFGAEGMNVVANYRSDEEGARETVRAIEEAGGAAAAVQADVSKNECVDALFDAAMFSFGGVDIWVNNAGIEVASPSDRKSIEEWQRVIDVNLTGVFAGCRRAIDHFLDRKMPGVIINLSSVHEIIPWPHFADYAASKAGVGMLTKTLALEYADRGIRVNAIAPGAMNTPINAEKFADPEARAATERLIPMGYVGAPEDVAAAAAWLASDQASYVTGTTLFVDGGMTLYPGFQFGQG.

Residues 65 to 66 (DV), Asn-92, Tyr-158, and Lys-162 contribute to the NAD(+) site. The active-site Proton acceptor is the Tyr-158.

It belongs to the short-chain dehydrogenases/reductases (SDR) family.

The enzyme catalyses 3-oxo-5beta-cholan-24-oate + NADH + H(+) = isolithocholate + NAD(+). The catalysed reaction is 12alpha-hydroxy-3-oxo-5beta-cholan-24-oate + NADH + H(+) = isodeoxycholate + NAD(+). It catalyses the reaction 7alpha,12alpha-dihydroxy-3-oxo-5beta-cholan-24-oate + NADH + H(+) = isocholate + NAD(+). It carries out the reaction 3-oxochenodeoxycholate + NADH + H(+) = isochenodeoxycholate + NAD(+). In terms of biological role, involved in the modification of secondary bile acids into iso-bile acids (3beta-bile acids) via epimerization of the 3-OH group through a 3-oxo-intermediate. Catalyzes the reduction of 12-alpha-hydroxy-3-oxo-5-beta-cholan-24-oate (3-oxo-DCA) and 3-oxo-5-beta-cholan-24-oate (3-oxo-LCA) to yield isodeoxycholate (isoDCA) and isolithocholate (isoLCA), respectively. Is also able to catalyze the reduction of 3-dehydrocholate (3-oxo-CA or 7alpha,12alpha-dihydroxy-3-oxo-5beta-cholan-24-oate) and 7-alpha-hydroxy-3-oxo-5-beta-cholan-24-oate (3-oxo-CDCA), into isocholate (isoCA) and isochenodeoxycholate (isoCDCA), respectively. Prefers NADH to NADPH as cosubstrate. The conversion of the abundant bile acid deoxycholate (DCA) into isoDCA by the gut bacterium E.lenta favors the growth of the keystone commensal genus Bacteroides, since isoDCA is less cytotoxic than its parent compound, DCA; iso-bile acids have thus a potential role in modulating gut community composition. The sequence is that of 3beta-hydroxysteroid dehydrogenase 1 from Eggerthella lenta (strain ATCC 25559 / DSM 2243 / CCUG 17323 / JCM 9979 / KCTC 3265 / NCTC 11813 / VPI 0255 / 1899 B) (Eubacterium lentum).